We begin with the raw amino-acid sequence, 73 residues long: Putative defensin-like protein 33 (73 aa).

The N-terminal stretch at 1–25 is a signal peptide; that stretch reads MASNKVSFIFILFLCVLSTAEFGEA. 3 disulfide bridges follow: Cys33–Cys59, Cys45–Cys68, and Cys49–Cys70.

It belongs to the DEFL family.

Its subcellular location is the secreted. This chain is Putative defensin-like protein 33, found in Arabidopsis thaliana (Mouse-ear cress).